Here is a 723-residue protein sequence, read N- to C-terminus: Probable alpha-fucosidase A (723 aa).

A signal peptide spans 1 to 15; it reads MRSLVLLGMSSLATA. Residues Asn-77, Asn-98, Asn-117, Asn-171, Asn-194, Asn-243, Asn-334, Asn-558, Asn-566, and Asn-595 are each glycosylated (N-linked (GlcNAc...) asparagine).

The protein belongs to the glycosyl hydrolase 95 family.

The protein resides in the secreted. The catalysed reaction is an alpha-L-fucoside + H2O = L-fucose + an alcohol. Functionally, alpha-fucosidase involved in degradation of fucosylated xyloglucans. Hydrolyzes alpha-1,2-linked fucose. This Aspergillus oryzae (strain ATCC 42149 / RIB 40) (Yellow koji mold) protein is Probable alpha-fucosidase A (afcA).